The chain runs to 82 residues: Cytochrome b559 subunit alpha (82 aa).

A helical membrane pass occupies residues 21 to 35 (VIHSITIPSLFIAGW). His-23 contributes to the heme binding site.

It belongs to the PsbE/PsbF family. As to quaternary structure, heterodimer of an alpha subunit and a beta subunit. PSII is composed of 1 copy each of membrane proteins PsbA, PsbB, PsbC, PsbD, PsbE, PsbF, PsbH, PsbI, PsbJ, PsbK, PsbL, PsbM, PsbT, PsbX, PsbY, PsbZ, Psb30/Ycf12, at least 3 peripheral proteins of the oxygen-evolving complex and a large number of cofactors. It forms dimeric complexes. The cofactor is heme b.

The protein resides in the plastid. It localises to the chloroplast thylakoid membrane. Its function is as follows. This b-type cytochrome is tightly associated with the reaction center of photosystem II (PSII). PSII is a light-driven water:plastoquinone oxidoreductase that uses light energy to abstract electrons from H(2)O, generating O(2) and a proton gradient subsequently used for ATP formation. It consists of a core antenna complex that captures photons, and an electron transfer chain that converts photonic excitation into a charge separation. The protein is Cytochrome b559 subunit alpha of Stigeoclonium helveticum (Green alga).